Consider the following 443-residue polypeptide: MAKTEMYQPPLGNRALFKMSIPGSKSLTNRHLIIAAIASGETTIHNLLESRDTNLMIEGLRRIGCKIEKLNHTGTHDTGVISPHCTCLNDLIQPSDVRIIPSKHYTCSTKIDCGLAGTVMRFLPVLAGLCKGSVEFFGDDQAIRRPMDGTLHALRKLGVQVDGDRIPFTVHGRGEIEGGALETTEHSSSQFISGLLLSACRFKNGLTLKHIGNPLPSRPYIDMTVEVMREWGINVTHSDGVWAVTPKELTGKHITIEPDLSNAAPFMIGAIVTGGSATIQNWPSKTSQPGKYLEAILPQFGAEITKTANTITVSGTGNITGIRADLGHIGELVPNLVALATLAETPSVFYNIGHIRYHETDRIEALVNEISSLGGTITAGKDYIKITPTTLTRSGVWKTYKDHRMATSGAIIGLRHKLTIEDIECTSKTFPRFADLWSGAFGK.

Lys-25, Ser-26, and Arg-30 together coordinate 3-phosphoshikimate. Position 25 (Lys-25) interacts with phosphoenolpyruvate. Residues Gly-117 and Arg-145 each coordinate phosphoenolpyruvate. 3-phosphoshikimate is bound by residues Ser-188, Ser-189, Gln-190, Ser-217, Glu-331, and His-358. Gln-190 lines the phosphoenolpyruvate pocket. Catalysis depends on Glu-331, which acts as the Proton acceptor. Phosphoenolpyruvate is bound by residues Arg-362, Arg-404, and Lys-428.

The protein belongs to the EPSP synthase family. Monomer.

It is found in the cytoplasm. It catalyses the reaction 3-phosphoshikimate + phosphoenolpyruvate = 5-O-(1-carboxyvinyl)-3-phosphoshikimate + phosphate. Its pathway is metabolic intermediate biosynthesis; chorismate biosynthesis; chorismate from D-erythrose 4-phosphate and phosphoenolpyruvate: step 6/7. Its function is as follows. Catalyzes the transfer of the enolpyruvyl moiety of phosphoenolpyruvate (PEP) to the 5-hydroxyl of shikimate-3-phosphate (S3P) to produce enolpyruvyl shikimate-3-phosphate and inorganic phosphate. The chain is 3-phosphoshikimate 1-carboxyvinyltransferase from Tropheryma whipplei (strain TW08/27) (Whipple's bacillus).